The sequence spans 375 residues: Geranylgeranyl transferase type-1 subunit beta (375 aa).

The segment at 1-33 (MSETAVSIDSDRSKSEEEDEEEYSPPVQSSPSA) is disordered. Position 2 is an N-acetylserine (Ser2). PFTB repeat units lie at residues 157–199 (SKSL…YMLD), 206–247 (KESA…RLMG), 265–306 (PSLL…KLIG), and 313–354 (KMAL…SLLE). Geranylgeranyl diphosphate-binding positions include 232 to 234 (HGG) and 285 to 288 (RTNK). The Zn(2+) site is built by Asp291 and Cys293. 294–297 (YAFW) is a geranylgeranyl diphosphate binding site. A Zn(2+)-binding site is contributed by His342.

It belongs to the protein prenyltransferase subunit beta family. Heterodimer of an alpha and a beta subunit. Zn(2+) serves as cofactor. The cofactor is Mg(2+). Expressed in roots, leaves, stems, flowers and siliques.

The enzyme catalyses geranylgeranyl diphosphate + L-cysteinyl-[protein] = S-geranylgeranyl-L-cysteinyl-[protein] + diphosphate. Catalyzes the transfer of a geranyl-geranyl moiety from geranyl-geranyl pyrophosphate to a cysteine at the fourth position from the C-terminus of proteins having the C-terminal sequence Cys-aliphatic-aliphatic-X (CaaX). Seems to exclusively prenylate CaaX substrates with leucine in the terminal position. The beta subunit is responsible for peptide-binding. May negatively regulate abscisic acid (ABA) signaling in guard cells and auxin-induced lateral root initiation. Functionally, negatively regulates ABA signaling in guard cells. in negative regulation of auxin-induced lateral root initiation. The sequence is that of Geranylgeranyl transferase type-1 subunit beta (GGB) from Arabidopsis thaliana (Mouse-ear cress).